The chain runs to 324 residues: tRNA N6-adenosine threonylcarbamoyltransferase (324 aa).

The Fe cation site is built by His-107, His-111, and Tyr-127. Substrate is bound by residues 127-131, Asp-159, Gly-172, Glu-176, and Asn-257; that span reads YVSGG. Asp-285 is a Fe cation binding site.

It belongs to the KAE1 / TsaD family. Monomer. Component of the KEOPS complex that consists of Kae1, Bud32, Cgi121 and Pcc1; the whole complex dimerizes. Requires Fe(2+) as cofactor.

It is found in the cytoplasm. It catalyses the reaction L-threonylcarbamoyladenylate + adenosine(37) in tRNA = N(6)-L-threonylcarbamoyladenosine(37) in tRNA + AMP + H(+). In terms of biological role, required for the formation of a threonylcarbamoyl group on adenosine at position 37 (t(6)A37) in tRNAs that read codons beginning with adenine. Is a component of the KEOPS complex that is probably involved in the transfer of the threonylcarbamoyl moiety of threonylcarbamoyl-AMP (TC-AMP) to the N6 group of A37. Kae1 likely plays a direct catalytic role in this reaction, but requires other protein(s) of the complex to fulfill this activity. This chain is tRNA N6-adenosine threonylcarbamoyltransferase, found in Pyrococcus horikoshii (strain ATCC 700860 / DSM 12428 / JCM 9974 / NBRC 100139 / OT-3).